The sequence spans 514 residues: Maturase K (514 aa).

This sequence belongs to the intron maturase 2 family. MatK subfamily.

It is found in the plastid. Its subcellular location is the chloroplast. Its function is as follows. Usually encoded in the trnK tRNA gene intron. Probably assists in splicing its own and other chloroplast group II introns. The chain is Maturase K from Acer palmatum (Japanese maple).